A 506-amino-acid chain; its full sequence is MAQVINTNSLSLLTQNNLNKSQSALGTAIERLSSGLRINSAKDDAAGQAIANRFTANIKGLTQASRNANDGISIAQTTEGALNEINNNLQRVRELAVQSANSTNSQSDLDSIQAEITQRLNEIDRVSGQTQFNGVKVLAQDNTLTIQVGANDGETIDIDLKQINSQTLGLDSLNVQKAYDVKDTAVTTKAYANNGTTLDVSGLDDAAIKAATGGTNGTASVTGGAVKFDADNNKYFVTIGGFTGADAAKNGDYEVNVATDGTVTLAAGATKTTMPAGATTKTEVQELKDTPAVVSADAKNALIAGGVDATDANGAELVKMSYTDKNGKTIEGGYALKAGDKYYAADYDEATGAIKAKTTSYTAADGTTKTAANQLGGVDGKTEVVTIDGKTYNASKAAGHDFKAQPELAEAAAKTTENPLQKIDAALAQVDALRSDLGAVQNRFNSAITNLGNTVNNLSEARSRIEDSDYATEVSNMSRAQILQQAGTSVLAQANQVPQNVLSLLR.

The protein belongs to the bacterial flagellin family.

It is found in the secreted. The protein localises to the bacterial flagellum. In terms of biological role, flagellin is the subunit protein which polymerizes to form the filaments of bacterial flagella. This chain is Phase 2 flagellin (fljB), found in Salmonella typhimurium (strain LT2 / SGSC1412 / ATCC 700720).